Reading from the N-terminus, the 572-residue chain is MRRKRDSYDYVIIGGGSAGSVLGARLSEDKDKNVLVLEAGRSDYFWDLFIQMPAALMFPSGNRFYDWEYQTDEEPHMGRRVDHARGKVLGGSSSINGMIYQRGNPMDYEGWAEPEGMDTWDFAHCLPYFKKLETTYGAAPYDKVRGHDGPIKLKRGPATNPLFKSFFNAGVEAGYHKTADVNGYRQEGFGPFDSQVHHGRRMSASRAYLRPALRRRNLDVETRAFVTKLIFDENNSKKVTGVTFKKNGKEHTVHANEVILSGGAFNTPQLLQLSGIGDSEFLKSKGIEPRMHLPGVGENFEDHLEVYIQHKCKQPVSLQPSLDVKRMPFIGLQWIFARKGAAASNHFEGGGFVRSNDDVDYPNLMFHFLPIAVRYDGQKAPVAHGYQVHVGPMYSNSRGSLKIKSKDPFEKPSIVFNYLSTKEDEREWIEAIRVARNILKQKAMDPFNGGEISPGPQVQTDEEILDWVRKDGETALHPSCSAKMGPASDPMAVVDPLTMKVHGMENLRVVDASAMPRTTNGNIHAPVLMLAEKAADIIRGRKPLEPQYVDYYKHGIDDEKAGAMEDDPFYQY.

An FAD-binding site is contributed by 9–38 (DYVIIGGGSAGSVLGARLSEDKDKNVLVLE). H477 functions as the Proton acceptor in the catalytic mechanism.

The protein belongs to the GMC oxidoreductase family. FAD serves as cofactor.

The enzyme catalyses choline + A = betaine aldehyde + AH2. It carries out the reaction betaine aldehyde + NAD(+) + H2O = glycine betaine + NADH + 2 H(+). The protein operates within amine and polyamine biosynthesis; betaine biosynthesis via choline pathway; betaine aldehyde from choline (cytochrome c reductase route): step 1/1. Involved in the biosynthesis of the osmoprotectant glycine betaine. Catalyzes the oxidation of choline to betaine aldehyde and betaine aldehyde to glycine betaine at the same rate. The chain is Oxygen-dependent choline dehydrogenase from Staphylococcus epidermidis (strain ATCC 35984 / DSM 28319 / BCRC 17069 / CCUG 31568 / BM 3577 / RP62A).